The chain runs to 360 residues: Serine/threonine-protein kinase SAPK4 (360 aa).

The Protein kinase domain maps to 4–260 (YEAVRDIGSG…MKEIKSHPWF (257 aa)). ATP contacts are provided by residues 10–18 (IGSGNFGVA) and lysine 33. Catalysis depends on aspartate 123, which acts as the Proton acceptor. The segment at 303–360 (TMPKSSRTGYWSDAGSDEEEKEEEERPEENEEEEEDEYDKRVKEVHASGELRMSSLRI) is disordered. A compositionally biased stretch (acidic residues) spans 317–339 (GSDEEEKEEEERPEENEEEEEDE). The segment covering 340–351 (YDKRVKEVHASG) has biased composition (basic and acidic residues).

The protein belongs to the protein kinase superfamily. Ser/Thr protein kinase family. In terms of processing, may be phosphorylated. As to expression, expressed in leaf blades, leaf sheaths and roots. Expressed in shoots and roots of young seedlings.

The enzyme catalyses L-seryl-[protein] + ATP = O-phospho-L-seryl-[protein] + ADP + H(+). The catalysed reaction is L-threonyl-[protein] + ATP = O-phospho-L-threonyl-[protein] + ADP + H(+). Activated by hyperosmotic stress. Its function is as follows. May play a role in signal transduction of hyperosmotic response. The polypeptide is Serine/threonine-protein kinase SAPK4 (SAPK4) (Oryza sativa subsp. japonica (Rice)).